Reading from the N-terminus, the 200-residue chain is Holliday junction resolvase RecU (200 aa).

A disordered region spans residues 1-25 (MTIRYPNGKRYNQASQPHKTPIKKH). Positions 85, 87, 100, and 119 each coordinate Mg(2+).

This sequence belongs to the RecU family. Requires Mg(2+) as cofactor.

It is found in the cytoplasm. It carries out the reaction Endonucleolytic cleavage at a junction such as a reciprocal single-stranded crossover between two homologous DNA duplexes (Holliday junction).. Endonuclease that resolves Holliday junction intermediates in genetic recombination. Cleaves mobile four-strand junctions by introducing symmetrical nicks in paired strands. Promotes annealing of linear ssDNA with homologous dsDNA. Required for DNA repair, homologous recombination and chromosome segregation. In Bacillus thuringiensis (strain Al Hakam), this protein is Holliday junction resolvase RecU.